The chain runs to 198 residues: Molybdopterin synthase catalytic subunit (198 aa).

Residues 107–108, lysine 123, and 130–132 each bind substrate; these read HR and KKE.

The protein belongs to the MoaE family. MOCS2B subfamily. In terms of assembly, heterotetramer; composed of 2 small (MOCS2A) and 2 large (MOCS2B) subunits.

It is found in the cytoplasm. It catalyses the reaction 2 [molybdopterin-synthase sulfur-carrier protein]-C-terminal-Gly-aminoethanethioate + cyclic pyranopterin phosphate + H2O = molybdopterin + 2 [molybdopterin-synthase sulfur-carrier protein]-C-terminal Gly-Gly + 2 H(+). It functions in the pathway cofactor biosynthesis; molybdopterin biosynthesis. Its function is as follows. Catalytic subunit of the molybdopterin synthase complex, a complex that catalyzes the conversion of precursor Z into molybdopterin. Acts by mediating the incorporation of 2 sulfur atoms from thiocarboxylated MOCS2A into precursor Z to generate a dithiolene group. This chain is Molybdopterin synthase catalytic subunit, found in Arabidopsis thaliana (Mouse-ear cress).